The following is a 340-amino-acid chain: Beta-ketoacyl-[acyl-carrier-protein] synthase III (340 aa).

Residues cysteine 119 and histidine 260 contribute to the active site. An ACP-binding region spans residues glutamine 261–arginine 265. Asparagine 290 is an active-site residue.

This sequence belongs to the thiolase-like superfamily. FabH family. As to quaternary structure, homodimer.

It is found in the cytoplasm. It catalyses the reaction malonyl-[ACP] + acetyl-CoA + H(+) = 3-oxobutanoyl-[ACP] + CO2 + CoA. The protein operates within lipid metabolism; fatty acid biosynthesis. Its function is as follows. Catalyzes the condensation reaction of fatty acid synthesis by the addition to an acyl acceptor of two carbons from malonyl-ACP. Catalyzes the first condensation reaction which initiates fatty acid synthesis and may therefore play a role in governing the total rate of fatty acid production. Possesses both acetoacetyl-ACP synthase and acetyl transacylase activities. Its substrate specificity determines the biosynthesis of branched-chain and/or straight-chain of fatty acids. This Sulfurovum sp. (strain NBC37-1) protein is Beta-ketoacyl-[acyl-carrier-protein] synthase III.